The chain runs to 691 residues: Methionine--tRNA ligase (691 aa).

A 'HIGH' region motif is present at residues 14–24 (PYANGPFHLGH). Residues cysteine 148, cysteine 151, cysteine 161, and cysteine 164 each contribute to the Zn(2+) site. The 'KMSKS' region motif lies at 344–348 (KMSKS). Lysine 347 is a binding site for ATP. The tRNA-binding domain maps to 585 to 691 (DFDRVDLRVA…PGAKPGMRVR (107 aa)).

This sequence belongs to the class-I aminoacyl-tRNA synthetase family. MetG type 1 subfamily. In terms of assembly, homodimer. Requires Zn(2+) as cofactor.

It localises to the cytoplasm. The enzyme catalyses tRNA(Met) + L-methionine + ATP = L-methionyl-tRNA(Met) + AMP + diphosphate. In terms of biological role, is required not only for elongation of protein synthesis but also for the initiation of all mRNA translation through initiator tRNA(fMet) aminoacylation. The chain is Methionine--tRNA ligase from Verminephrobacter eiseniae (strain EF01-2).